The primary structure comprises 943 residues: Receptor-like kinase TMK3 (943 aa).

The signal sequence occupies residues 1 to 24 (MSNSHLGTLCFIISLLGLANFSLS). The Extracellular portion of the chain corresponds to 25-482 (QTGLDDSTMQ…ETSKKSSNVK (458 aa)). N41 is a glycosylation site (N-linked (GlcNAc...) asparagine). A disulfide bridge connects residues C54 and C61. 10 LRR repeats span residues 64 to 88 (SNRV…LQSL), 89 to 111 (SELV…LSGL), 112 to 134 (SRLQ…LFSG), 136 to 160 (SSLQ…VKEA), 162 to 183 (SLQN…FFGS), 186 to 210 (LPSL…FAGT), 212 to 232 (IQSL…LGNM), 233 to 254 (TSLV…DLSG), 255 to 279 (LVSL…LVSL), and 281 to 301 (SLTT…LFGK). N-linked (GlcNAc...) asparagine glycosylation is found at N165 and N170. N-linked (GlcNAc...) asparagine glycosylation is found at N223 and N231. Residue N286 is glycosylated (N-linked (GlcNAc...) asparagine). Disulfide bonds link C315–C323 and C353–C361. 3 LRR repeats span residues 363–386 (GGNI…SLAK), 387–410 (LTSL…ELTT), and 411–438 (LSKL…VTLV). Residue N365 is glycosylated (N-linked (GlcNAc...) asparagine). The segment at 441-476 (GNANMGKNGPNKTSDAPGASPGSKPSGGSDGSETSK) is disordered. N-linked (GlcNAc...) asparagine glycosylation occurs at N451. Over residues 454–467 (SDAPGASPGSKPSG) the composition is skewed to low complexity. Residues 483–503 (IIVPVVGGVVGALCLVGLGVC) form a helical membrane-spanning segment. Residues 504-943 (LYAKKRKRPA…ADSFTSVDGR (440 aa)) lie on the Cytoplasmic side of the membrane. The segment at 514–534 (RVQSPSSNMVIHPHHSGDNDD) is disordered. Positions 585 to 866 (FSEENILGRG…AHIVNVLSSL (282 aa)) constitute a Protein kinase domain. ATP-binding positions include 591-599 (LGRGGFGTV) and K613. The active-site Proton acceptor is the D714. The segment at 904 to 943 (QTADDSGSSSSAYGSKDNTQTSIPTRPSGFADSFTSVDGR) is disordered. A compositionally biased stretch (low complexity) spans 906-918 (ADDSGSSSSAYGS). The span at 919-928 (KDNTQTSIPT) shows a compositional bias: polar residues.

It belongs to the protein kinase superfamily. Ser/Thr protein kinase family. Expressed in roots, leaves, stems, siliques and flowers.

The protein localises to the membrane. It carries out the reaction L-seryl-[protein] + ATP = O-phospho-L-seryl-[protein] + ADP + H(+). The catalysed reaction is L-threonyl-[protein] + ATP = O-phospho-L-threonyl-[protein] + ADP + H(+). Functionally, involved in auxin signal transduction and cell expansion and proliferation regulation. The protein is Receptor-like kinase TMK3 of Arabidopsis thaliana (Mouse-ear cress).